Here is a 458-residue protein sequence, read N- to C-terminus: Translation initiation factor eIF2B subunit gamma (458 aa).

Residue serine 291 is modified to Phosphoserine.

The protein belongs to the eIF-2B gamma/epsilon subunits family. Component of the translation initiation factor 2B (eIF2B) complex which is a heterodecamer of two sets of five different subunits: alpha, beta, gamma, delta and epsilon. Subunits alpha, beta and delta comprise a regulatory subcomplex and subunits epsilon and gamma comprise a catalytic subcomplex. Within the complex, the hexameric regulatory complex resides at the center, with the two heterodimeric catalytic subcomplexes bound on opposite sides.

It localises to the cytoplasm. It is found in the cytosol. Its function is as follows. Acts as a component of the translation initiation factor 2B (eIF2B) complex, which catalyzes the exchange of GDP for GTP on the eukaryotic initiation factor 2 (eIF2) complex gamma subunit. Its guanine nucleotide exchange factor activity is repressed when bound to eIF2 complex phosphorylated on the alpha subunit, thereby limiting the amount of methionyl-initiator methionine tRNA available to the ribosome and consequently global translation is repressed. The chain is Translation initiation factor eIF2B subunit gamma (tif223) from Schizosaccharomyces pombe (strain 972 / ATCC 24843) (Fission yeast).